Here is a 275-residue protein sequence, read N- to C-terminus: Formamidopyrimidine-DNA glycosylase (275 aa).

Catalysis depends on P2, which acts as the Schiff-base intermediate with DNA. E3 acts as the Proton donor in catalysis. The active-site Proton donor; for beta-elimination activity is K58. DNA-binding residues include H92, R111, and R154. Residues 239 to 273 form an FPG-type zinc finger; sequence HVYHRQGLPCQRCGTPIERIKVAQRGTHFCPHCQV. The active-site Proton donor; for delta-elimination activity is the R263.

Belongs to the FPG family. Monomer. Zn(2+) is required as a cofactor.

The catalysed reaction is Hydrolysis of DNA containing ring-opened 7-methylguanine residues, releasing 2,6-diamino-4-hydroxy-5-(N-methyl)formamidopyrimidine.. It carries out the reaction 2'-deoxyribonucleotide-(2'-deoxyribose 5'-phosphate)-2'-deoxyribonucleotide-DNA = a 3'-end 2'-deoxyribonucleotide-(2,3-dehydro-2,3-deoxyribose 5'-phosphate)-DNA + a 5'-end 5'-phospho-2'-deoxyribonucleoside-DNA + H(+). Involved in base excision repair of DNA damaged by oxidation or by mutagenic agents. Acts as a DNA glycosylase that recognizes and removes damaged bases. Has a preference for oxidized purines, such as 7,8-dihydro-8-oxoguanine (8-oxoG). Has AP (apurinic/apyrimidinic) lyase activity and introduces nicks in the DNA strand. Cleaves the DNA backbone by beta-delta elimination to generate a single-strand break at the site of the removed base with both 3'- and 5'-phosphates. The chain is Formamidopyrimidine-DNA glycosylase from Pediococcus pentosaceus (strain ATCC 25745 / CCUG 21536 / LMG 10740 / 183-1w).